We begin with the raw amino-acid sequence, 220 residues long: Aspartic protease inhibitor 2 (220 aa).

The signal sequence occupies residues 1 to 23; sequence MMKCLFLLCLCLLPIVVFSSTFT. Residues 24–32 constitute a propeptide that is removed on maturation; the sequence is SQNLIDLPS. The short motif at 26 to 31 is the Vacuolar targeting signal element; that stretch reads NLIDLP. N-linked (GlcNAc...) asparagine glycosylation is present at Asn51. 2 disulfides stabilise this stretch: Cys80–Cys125 and Cys174–Cys185.

It belongs to the protease inhibitor I3 (leguminous Kunitz-type inhibitor) family. As to expression, tubers.

Its subcellular location is the vacuole. In terms of biological role, inhibitor of cathepsin D (aspartic protease). May also inhibit trypsin and chymotrypsin (serine proteases). Protects the plant by inhibiting proteases of invading organisms. The polypeptide is Aspartic protease inhibitor 2 (Solanum tuberosum (Potato)).